The primary structure comprises 428 residues: Adenylosuccinate synthetase (428 aa).

GTP contacts are provided by residues G11 to K17 and G39 to T41. D12 functions as the Proton acceptor in the catalytic mechanism. Residues D12 and G39 each contribute to the Mg(2+) site. IMP-binding positions include D12 to K15, N37 to H40, T130, R144, N226, T241, and R305. Residue H40 is the Proton donor of the active site. A substrate-binding site is contributed by V301–R307. GTP contacts are provided by residues R307, K333–D335, and G415–G417.

The protein belongs to the adenylosuccinate synthetase family. As to quaternary structure, homodimer. It depends on Mg(2+) as a cofactor.

Its subcellular location is the cytoplasm. It carries out the reaction IMP + L-aspartate + GTP = N(6)-(1,2-dicarboxyethyl)-AMP + GDP + phosphate + 2 H(+). It participates in purine metabolism; AMP biosynthesis via de novo pathway; AMP from IMP: step 1/2. Plays an important role in the de novo pathway and in the salvage pathway of purine nucleotide biosynthesis. Catalyzes the first committed step in the biosynthesis of AMP from IMP. In Lodderomyces elongisporus (strain ATCC 11503 / CBS 2605 / JCM 1781 / NBRC 1676 / NRRL YB-4239) (Yeast), this protein is Adenylosuccinate synthetase.